The sequence spans 565 residues: Wee1-like protein kinase 2 (565 aa).

2 stretches are compositionally biased toward basic and acidic residues: residues 1–12 and 26–52; these read MGDNGDNKELKQ and EGQK…DSEA. Disordered stretches follow at residues 1–142 and 169–189; these read MGDN…TPGP and KSNG…EEGK. Position 77 is a phosphoserine (Ser-77). The Nuclear localization signal signature appears at 173–175; the sequence is KRK. A compositionally biased stretch (basic and acidic residues) spans 178–189; the sequence is RDLEEAGPEEGK. The Protein kinase domain maps to 214 to 492; it reads FLEVEKIGVG…TRSRVLCPSL (279 aa). ATP-binding positions include 220–228 and Lys-243; that span reads IGVGEFGTV. Positions 317–331 match the Nuclear export signal motif; the sequence is KLKDILLQISLGLKY. The active-site Proton acceptor is Asp-341. Residues Asn-346 and Asp-382 each contribute to the Mg(2+) site. Residues 495 to 521 are a coiled coil; the sequence is TEELQQQLNLEKFKTATLERELKEVQR. The disordered stretch occupies residues 518 to 565; that stretch reads EVQRAQSSKEGQSSPGVTGTHTGSRSTRRLVGGKSAKSSSFTWGQSSP. Composition is skewed to polar residues over residues 521-534 and 553-565; these read RAQS…SPGV and AKSS…QSSP.

This sequence belongs to the protein kinase superfamily. Ser/Thr protein kinase family. WEE1 subfamily. In terms of processing, phosphorylation leads to increase its activity. As to expression, ovary-specific.

It localises to the nucleus. It catalyses the reaction L-tyrosyl-[protein] + ATP = O-phospho-L-tyrosyl-[protein] + ADP + H(+). Oocyte-specific protein tyrosine kinase that phosphorylates and inhibits CDK1 and acts as a key regulator of meiosis during both prophase I and metaphase II. Required to maintain meiotic arrest in oocytes during the germinal vesicle (GV) stage, a long period of quiescence at dictyate prophase I, by phosphorylating CDK1 at 'Tyr-15', leading to inhibit CDK1 activity and prevent meiotic reentry. Also required for metaphase II exit during egg activation by phosphorylating CDK1 at 'Tyr-15', to ensure exit from meiosis in oocytes and promote pronuclear formation. The protein is Wee1-like protein kinase 2 (WEE2) of Sus scrofa (Pig).